Consider the following 148-residue polypeptide: Helix-loop-helix protein 14 (148 aa).

Disordered regions lie at residues 1–21 (MAKKNQVARNERERKRVHQVN), 63–83 (DPQQPSVSSSTPDYTMNNSNN), and 112–132 (GDVSHNFNSPTSSVSSSSYSP). Residues 4 to 17 (KNQVARNERERKRV) are basic motif. A bHLH domain is found at 4–56 (KNQVARNERERKRVHQVNHGFDVLRNRLQPKNHTKKWSKADTLREAVKYIQQL). The interval 18–56 (HQVNHGFDVLRNRLQPKNHTKKWSKADTLREAVKYIQQL) is helix-loop-helix motif. Polar residues predominate over residues 63–78 (DPQQPSVSSSTPDYTM). Residues 120 to 132 (SPTSSVSSSSYSP) show a composition bias toward low complexity.

Its subcellular location is the nucleus. Functionally, probable transcription factor, involved in determining neuroblast cell fate, morphogenesis and aspects of terminal differentiation in both left/right symmetric and asymmetric neuronal lineages. This is Helix-loop-helix protein 14 from Caenorhabditis elegans.